The following is a 521-amino-acid chain: Aspartic proteinase yapsin-1 (521 aa).

An N-terminal signal peptide occupies residues 1–17 (MRIWILIFFSFIKLVSS). At 18–500 (LQYTGNGVLA…NAVANAGNSF (483 aa)) the chain is on the extracellular side. In terms of domain architecture, Peptidase A1 spans 67 to 409 (YTTTLSIGRP…HQSQKMIAIG (343 aa)). Asp85 is a catalytic residue. Residues Asn136, Asn157, Asn250, Asn289, Asn295, Asn354, Asn414, Asn418, Asn460, and Asn484 are each glycosylated (N-linked (GlcNAc...) asparagine). Residues 501 to 521 (SPLSAMVIMMMSAVFLGLGII) traverse the membrane as a helical segment.

It belongs to the peptidase A1 family.

Its subcellular location is the endoplasmic reticulum membrane. It localises to the secreted. The protein localises to the cell wall. In terms of biological role, cleaves at paired basic residues. This chain is Aspartic proteinase yapsin-1 (yps1), found in Schizosaccharomyces pombe (strain 972 / ATCC 24843) (Fission yeast).